The sequence spans 372 residues: Alanine racemase (372 aa).

The active-site Proton acceptor; specific for D-alanine is the lysine 36. Lysine 36 bears the N6-(pyridoxal phosphate)lysine mark. A substrate-binding site is contributed by arginine 134. The active-site Proton acceptor; specific for L-alanine is tyrosine 266. A substrate-binding site is contributed by methionine 314.

The protein belongs to the alanine racemase family. It depends on pyridoxal 5'-phosphate as a cofactor.

The catalysed reaction is L-alanine = D-alanine. The protein operates within amino-acid biosynthesis; D-alanine biosynthesis; D-alanine from L-alanine: step 1/1. Functionally, catalyzes the interconversion of L-alanine and D-alanine. May also act on other amino acids. This is Alanine racemase (alr) from Nitratidesulfovibrio vulgaris (strain DSM 19637 / Miyazaki F) (Desulfovibrio vulgaris).